A 1062-amino-acid polypeptide reads, in one-letter code: SLIT-ROBO Rho GTPase-activating protein 1 (1062 aa).

The region spanning 19 to 314 (SQVKEIRAQL…AVDNLEPRSD (296 aa)) is the F-BAR domain. Residues 352–382 (QAELMLRNQQLQSRLATLKIESEEVKKTTEA) are a coiled coil. A Phosphoserine modification is found at S416. Positions 481 to 671 (GRRNSHARHQ…TIIIHHETIF (191 aa)) constitute a Rho-GAP domain. The SH3 domain occupies 720–779 (CEPIEAIAKFDYVGRSARELSFKKGASLLLYHRASEDWWEGRHNGIDGLVPHQYIVVQDM). The segment covering 785 to 799 (DTLSQKADSEASSGP) has biased composition (polar residues). The disordered stretch occupies residues 785–931 (DTLSQKADSE…TGFNDHKPLD (147 aa)). A phosphoserine mark is found at S812 and S894. The span at 899–908 (SRHDSLKKID) shows a compositional bias: basic and acidic residues. Phosphoserine is present on S909. Over residues 914 to 923 (RSTSSGQYTG) the composition is skewed to polar residues. A coiled-coil region spans residues 933-960 (ETIAQDIEETMNTALNELRELERQSTVK). Residues 974–988 (KNSPTPATSTESLSP) are compositionally biased toward polar residues. Disordered stretches follow at residues 974 to 1013 (KNSPTPATSTESLSPLHNVALRGSEPQIRRSTSSSSETMS) and 1028 to 1062 (KPPALRPKPAVLPKTNPTMGPAAPSQGPTDKSCTM). S976 carries the phosphoserine modification. T978 carries the post-translational modification Phosphothreonine. A compositionally biased stretch (low complexity) spans 1004 to 1013 (STSSSSETMS). S1009 carries the phosphoserine modification. Polar residues predominate over residues 1053-1062 (QGPTDKSCTM).

As to quaternary structure, homodimer. Forms a heterooligomer with SRGAP2 and SRGAP3 through its F-BAR domain. Interacts with CDC42 and RHOA. Interacts with FASLG. Interacts (via SH3 domain) with ROBO1.

Functionally, GTPase-activating protein for RhoA and Cdc42 small GTPases. Together with CDC42 seems to be involved in the pathway mediating the repulsive signaling of Robo and Slit proteins in neuronal migration. SLIT2, probably through interaction with ROBO1, increases the interaction of SRGAP1 with ROBO1 and inactivates CDC42. This chain is SLIT-ROBO Rho GTPase-activating protein 1 (Srgap1), found in Mus musculus (Mouse).